The following is a 126-amino-acid chain: Large-conductance mechanosensitive channel (126 aa).

3 helical membrane-spanning segments follow: residues 14–34, 40–60, and 67–87; these read VIDLAIGVIIGGAFGKIVTSL, MPLLGLLLGGLDFSALSFTFV, and GLFIQSIVNFFIISFSIFLFI.

This sequence belongs to the MscL family. In terms of assembly, homopentamer.

The protein resides in the cell membrane. Functionally, channel that opens in response to stretch forces in the membrane lipid bilayer. May participate in the regulation of osmotic pressure changes within the cell. The chain is Large-conductance mechanosensitive channel from Bacillus licheniformis (strain ATCC 14580 / DSM 13 / JCM 2505 / CCUG 7422 / NBRC 12200 / NCIMB 9375 / NCTC 10341 / NRRL NRS-1264 / Gibson 46).